We begin with the raw amino-acid sequence, 334 residues long: Formamidase (334 aa).

The 247-residue stretch at F14 to P260 folds into the CN hydrolase domain. E60 acts as the Proton acceptor in catalysis. The active-site Proton donor is K133. C166 serves as the catalytic Nucleophile.

The protein belongs to the carbon-nitrogen hydrolase superfamily. Aliphatic amidase family.

It catalyses the reaction formamide + H2O = formate + NH4(+). Functionally, is an aliphatic amidase with a restricted substrate specificity, as it only hydrolyzes formamide. This Helicobacter acinonychis (strain Sheeba) protein is Formamidase.